The chain runs to 333 residues: uncharacterized protein (333 aa).

This is an uncharacterized protein from Gallus gallus (Chicken).